The sequence spans 878 residues: Protein daughter of sevenless (878 aa).

One can recognise a PH domain in the interval arginine 3–histidine 113. The tract at residues glutamate 132–alanine 176 is disordered. Residues glutamine 136 to serine 159 are compositionally biased toward low complexity. Residues alanine 160 to valine 169 show a composition bias toward polar residues. Residues alanine 246–asparagine 275 are a coiled coil. The segment at asparagine 391–glutamate 437 is disordered. A Phosphoserine modification is found at serine 399. Threonine 481 carries the phosphothreonine modification. 2 interaction with DRK regions span residues aspartate 638–valine 650 and glycine 690–alanine 702. Disordered stretches follow at residues glutamine 686 to alanine 721 and leucine 749 to serine 773. 2 stretches are compositionally biased toward polar residues: residues asparagine 707–serine 718 and serine 760–arginine 770. At threonine 771 the chain carries Phosphothreonine. Tyrosine 801 and tyrosine 854 each carry phosphotyrosine.

Interacts with DRK. Phosphorylated on Tyr-801 and Tyr-854 in response to sevenless activation, which initiates the recruitment of the phosphatase CSW.

Its subcellular location is the cytoplasm. The protein resides in the membrane. Functionally, essential component for signaling from various receptor tyrosine kinases such as Sevenless, TORSO and DER. Required for photoreceptor cell and wing development. This is Protein daughter of sevenless (dos) from Drosophila melanogaster (Fruit fly).